The primary structure comprises 549 residues: Probable chaperonin-like protein PrmG (549 aa).

It belongs to the chaperonin (HSP60) family.

In terms of biological role, probably plays an essential role in the productive folding of PrmA, and thus in the formation of the active PrmABCD complex. The sequence is that of Probable chaperonin-like protein PrmG (prmG) from Rhodococcus jostii (strain RHA1).